We begin with the raw amino-acid sequence, 499 residues long: MENKYMLSLDQGTTSSRAILFDKSGAIIGVAQKEFTQIYPKPGWVEHNAEEIWESQLEVLKAVLLENHVKPEEIAGIGITNQRETTVVWDKHTGKPIHHAIVWQSRQSIDICNQLKEQGFEQTVREKTGLLIDAYFSGTKVKWLLDHVEGARERAEKGDLLFGTIDTWLIWKLTNGLVHVTDYSNASRTLMFNIHSLEWDDELLNMLQIPKSMLPAVRPSSEMYGYTDEKLFEFQIPIAGIAGDQQAALFGQACFAEGQAKNTYGTGCFMLMNTGEKAVASKNGLLTTIAWGVDGKVEYALEGSIFVAGAAIQWLRDGLKLIEKSSDSEKHALAVDTTDGVYMVPAFVGLGAPYWDMEARGAIFGLTRGTTEDHLIRAALESLAYQTRDVLEAMEADSGIRLQKLAVDGGAVANNFLMQFQSDILNTEVERPRVNETTALGAAYLAGLAVGYWGSKEDIVNNKVVERSFSPDMADEVRQGLYAGWKQAVTATMGYKIRH.

Threonine 13 is an ADP binding site. Residues threonine 13, threonine 14, and serine 15 each coordinate ATP. Threonine 13 provides a ligand contact to sn-glycerol 3-phosphate. Residue arginine 17 participates in ADP binding. Arginine 83, glutamate 84, tyrosine 135, and aspartate 244 together coordinate sn-glycerol 3-phosphate. Arginine 83, glutamate 84, tyrosine 135, aspartate 244, and glutamine 245 together coordinate glycerol. ADP-binding residues include threonine 266 and glycine 309. ATP-binding residues include threonine 266, glycine 309, glutamine 313, and glycine 410. Residues glycine 410 and asparagine 414 each coordinate ADP.

The protein belongs to the FGGY kinase family. In terms of assembly, homotetramer and homodimer (in equilibrium).

It catalyses the reaction glycerol + ATP = sn-glycerol 3-phosphate + ADP + H(+). The protein operates within polyol metabolism; glycerol degradation via glycerol kinase pathway; sn-glycerol 3-phosphate from glycerol: step 1/1. With respect to regulation, activated by phosphorylation and inhibited by fructose 1,6-bisphosphate (FBP). Functionally, key enzyme in the regulation of glycerol uptake and metabolism. Catalyzes the phosphorylation of glycerol to yield sn-glycerol 3-phosphate. This is Glycerol kinase from Brevibacillus brevis (strain 47 / JCM 6285 / NBRC 100599).